Reading from the N-terminus, the 362-residue chain is Aminomethyltransferase (362 aa).

The protein belongs to the GcvT family. The glycine cleavage system is composed of four proteins: P, T, L and H.

It carries out the reaction N(6)-[(R)-S(8)-aminomethyldihydrolipoyl]-L-lysyl-[protein] + (6S)-5,6,7,8-tetrahydrofolate = N(6)-[(R)-dihydrolipoyl]-L-lysyl-[protein] + (6R)-5,10-methylene-5,6,7,8-tetrahydrofolate + NH4(+). The glycine cleavage system catalyzes the degradation of glycine. This is Aminomethyltransferase from Pseudothermotoga lettingae (strain ATCC BAA-301 / DSM 14385 / NBRC 107922 / TMO) (Thermotoga lettingae).